The sequence spans 418 residues: MKFAIESISKNSGRLGQLRIRDGGPEFKTPLLLQTTKGGSIPWLSADVFETHVSRKPQVLQFTLSTMEQMTEALTHWNSGGGRGLSDYVGLPGHLNILLLRDPCETTPSGGNDRDILPLFTRRGKESLSSERYMEIVASFKPDMYEGLCDADTNLESAKKRVQKSVDRTEKFMQYIYEHRGKVNSTLLAPIVGGYNTFARTQSIKHAREQPAGSYGGYIFEGFHANGLSATTLDTSKLLPIVEHCVKQLEEDKPKILPGAYTPLTVLELIQQGIDVFDTSYAYCASLNFKALSFSFVQDAVEHVPFLDITDEAIKEDFTPPLSNCNCLTCQKHTRAYLHHLYKTNELLGPILLMVHNLYHYMAFFEKIRESVAKDTLPQLTELVRNQNGKTQVDYSIAANTKVISKATMGKGFAAAAV.

Zn(2+) is bound by residues Cys325, Cys327, Cys330, and His356.

This sequence belongs to the queuine tRNA-ribosyltransferase family. QTRT2 subfamily. As to quaternary structure, heterodimer of a catalytic subunit and an accessory subunit. Requires Zn(2+) as cofactor.

It is found in the cytoplasm. In terms of biological role, non-catalytic subunit of the queuine tRNA-ribosyltransferase (TGT) that catalyzes the base-exchange of a guanine (G) residue with queuine (Q) at position 34 (anticodon wobble position) in tRNAs with GU(N) anticodons (tRNA-Asp, -Asn, -His and -Tyr), resulting in the hypermodified nucleoside queuosine (7-(((4,5-cis-dihydroxy-2-cyclopenten-1-yl)amino)methyl)-7-deazaguanosine). In Drosophila melanogaster (Fruit fly), this protein is Queuine tRNA-ribosyltransferase accessory subunit 2.